Consider the following 183-residue polypeptide: Peptidyl-tRNA hydrolase (183 aa).

TRNA is bound at residue Y14. The active-site Proton acceptor is H19. Residues Y61, N63, and N109 each coordinate tRNA.

It belongs to the PTH family. In terms of assembly, monomer.

The protein localises to the cytoplasm. It carries out the reaction an N-acyl-L-alpha-aminoacyl-tRNA + H2O = an N-acyl-L-amino acid + a tRNA + H(+). Functionally, hydrolyzes ribosome-free peptidyl-tRNAs (with 1 or more amino acids incorporated), which drop off the ribosome during protein synthesis, or as a result of ribosome stalling. In terms of biological role, catalyzes the release of premature peptidyl moieties from peptidyl-tRNA molecules trapped in stalled 50S ribosomal subunits, and thus maintains levels of free tRNAs and 50S ribosomes. The protein is Peptidyl-tRNA hydrolase of Aliarcobacter butzleri (strain RM4018) (Arcobacter butzleri).